A 292-amino-acid chain; its full sequence is Ribosomal protein L11 methyltransferase (292 aa).

The S-adenosyl-L-methionine site is built by threonine 144, glycine 165, aspartate 187, and asparagine 229.

This sequence belongs to the methyltransferase superfamily. PrmA family.

The protein resides in the cytoplasm. It catalyses the reaction L-lysyl-[protein] + 3 S-adenosyl-L-methionine = N(6),N(6),N(6)-trimethyl-L-lysyl-[protein] + 3 S-adenosyl-L-homocysteine + 3 H(+). Functionally, methylates ribosomal protein L11. The protein is Ribosomal protein L11 methyltransferase of Pseudomonas fluorescens (strain Pf0-1).